A 244-amino-acid chain; its full sequence is Nonsense-mediated decay protein 4 (244 aa).

The protein resides in the cytoplasm. In terms of biological role, involved in nonsense-mediated decay of mRNAs containing premature stop codons. In Candida glabrata (strain ATCC 2001 / BCRC 20586 / JCM 3761 / NBRC 0622 / NRRL Y-65 / CBS 138) (Yeast), this protein is Nonsense-mediated decay protein 4 (NMD4).